Here is a 381-residue protein sequence, read N- to C-terminus: Homoserine O-acetyltransferase (381 aa).

Residues 47 to 359 (NAILICHALT…DKGHDAFLLD (313 aa)) form the AB hydrolase-1 domain. The active-site Nucleophile is the Ser-153. Substrate is bound at residue Arg-223. Residues Asp-320 and His-353 contribute to the active site. Asp-354 contacts substrate.

It belongs to the AB hydrolase superfamily. MetX family. Homodimer.

It is found in the cytoplasm. It carries out the reaction L-homoserine + acetyl-CoA = O-acetyl-L-homoserine + CoA. It participates in amino-acid biosynthesis; L-methionine biosynthesis via de novo pathway; O-acetyl-L-homoserine from L-homoserine: step 1/1. Transfers an acetyl group from acetyl-CoA to L-homoserine, forming acetyl-L-homoserine. The protein is Homoserine O-acetyltransferase of Acidiphilium cryptum (strain JF-5).